The sequence spans 378 residues: Lipid-A-disaccharide synthase (378 aa).

This sequence belongs to the LpxB family.

It carries out the reaction a lipid X + a UDP-2-N,3-O-bis[(3R)-3-hydroxyacyl]-alpha-D-glucosamine = a lipid A disaccharide + UDP + H(+). Its pathway is bacterial outer membrane biogenesis; LPS lipid A biosynthesis. Its function is as follows. Condensation of UDP-2,3-diacylglucosamine and 2,3-diacylglucosamine-1-phosphate to form lipid A disaccharide, a precursor of lipid A, a phosphorylated glycolipid that anchors the lipopolysaccharide to the outer membrane of the cell. The chain is Lipid-A-disaccharide synthase from Pseudomonas aeruginosa (strain LESB58).